A 519-amino-acid chain; its full sequence is Probable DNA ligase (519 aa).

Glutamate 221 is a binding site for ATP. Lysine 223 (N6-AMP-lysine intermediate) is an active-site residue. Arginine 228, arginine 243, glutamate 272, phenylalanine 312, arginine 384, and lysine 390 together coordinate ATP.

This sequence belongs to the ATP-dependent DNA ligase family. Requires Mg(2+) as cofactor.

It carries out the reaction ATP + (deoxyribonucleotide)n-3'-hydroxyl + 5'-phospho-(deoxyribonucleotide)m = (deoxyribonucleotide)n+m + AMP + diphosphate.. DNA ligase that seals nicks in double-stranded DNA during DNA replication, DNA recombination and DNA repair. This Mycolicibacterium paratuberculosis (strain ATCC BAA-968 / K-10) (Mycobacterium paratuberculosis) protein is Probable DNA ligase.